A 132-amino-acid polypeptide reads, in one-letter code: Small ribosomal subunit protein uS8 (132 aa).

Belongs to the universal ribosomal protein uS8 family. In terms of assembly, part of the 30S ribosomal subunit. Contacts proteins S5 and S12.

Its function is as follows. One of the primary rRNA binding proteins, it binds directly to 16S rRNA central domain where it helps coordinate assembly of the platform of the 30S subunit. The polypeptide is Small ribosomal subunit protein uS8 (Desulforamulus reducens (strain ATCC BAA-1160 / DSM 100696 / MI-1) (Desulfotomaculum reducens)).